We begin with the raw amino-acid sequence, 424 residues long: Histidine--tRNA ligase (424 aa).

Belongs to the class-II aminoacyl-tRNA synthetase family. In terms of assembly, homodimer.

Its subcellular location is the cytoplasm. It carries out the reaction tRNA(His) + L-histidine + ATP = L-histidyl-tRNA(His) + AMP + diphosphate + H(+). In Shigella dysenteriae serotype 1 (strain Sd197), this protein is Histidine--tRNA ligase.